The sequence spans 836 residues: Protein AKNAD1 (836 aa).

3 stretches are compositionally biased toward polar residues: residues 159–172 (SWPKEQTPELTDQL), 181–192 (SNKPGSATTTEE), and 227–248 (SYQGQSPQKQQTEKANSGNTFK). 2 disordered regions span residues 159–248 (SWPK…NTFK) and 303–325 (LETTPESNCVEKQHQEQKGKITE). A compositionally biased stretch (basic and acidic residues) spans 311-323 (CVEKQHQEQKGKI). Residues 372 to 484 (QKISQGKQMC…DVKEKMDESK (113 aa)) adopt a coiled-coil conformation. Disordered regions lie at residues 510–545 (SNEIPKEHPGHPSGPRGSGGSEVTGTPQGGPQEAPN) and 575–596 (MRLSSNSGEDPNGTPRRQDCAE).

The protein belongs to the AKNA family.

The protein is Protein AKNAD1 (AKNAD1) of Homo sapiens (Human).